The sequence spans 537 residues: Lysosomal cobalamin transport escort protein LMBD1 (537 aa).

Residues 1 to 7 (MAAAAAD) are Extracellular-facing. The helical transmembrane segment at 8-28 (LVIGWCIFGLLLLAILAFCWV) threads the bilayer. At 29–47 (YVRKYQSQRESEVVSTVTA) the chain is on the cytoplasmic side. The helical transmembrane segment at 48–68 (IFSLAVALITSALLPVDIFLV) threads the bilayer. The Extracellular segment spans residues 69–97 (SYMKNQNGTFKDWANANVTVQIENTVLYG). Residues asparagine 75 and asparagine 85 are each glycosylated (N-linked (GlcNAc...) asparagine). Residues 98–118 (YYTLYSVILFCVFFWIPFVYF) form a helical membrane-spanning segment. Residues 119-141 (YYEEKDDDDTSKCTQVKTALKYT) lie on the Cytoplasmic side of the membrane. Residues 142 to 162 (LGFVVICALLLLVGAFVPLNL) form a helical membrane-spanning segment. The Extracellular portion of the chain corresponds to 163–185 (PNNNNSTEWEKVKLLFEDLGTGQ). Asparagine 166 and asparagine 167 each carry an N-linked (GlcNAc...) asparagine glycan. A helical transmembrane segment spans residues 186-206 (GLAALSFSISSLTLIGMLAAI). The Cytoplasmic portion of the chain corresponds to 207-302 (TYTAYGMSAL…KFCGALRPLK (96 aa)). The YERL motif; mediates interaction with adapter protein complex 2 and is essential for its function in clathrin-mediated endocytosis of INSR signature appears at 229–232 (YERL). Threonine 235 is modified (phosphothreonine). The WTKF motif; mediates interaction with adapter protein complex 2 and is essential for its function in clathrin-mediated endocytosis of INSR motif lies at 291 to 294 (WTKF). A helical membrane pass occupies residues 303–323 (IIWGIFFILVALLFVISLFLS). Residues 324-361 (NLDKALHSAGIDSGFIVFGTNLSNPLNMLLPLLQTVFP) lie on the Extracellular side of the membrane. Residue asparagine 344 is glycosylated (N-linked (GlcNAc...) asparagine). Residues 362–382 (LDYILITIIIMYFIFTSMAGI) form a helical membrane-spanning segment. Residues 383 to 405 (RNIGIWFFWIRLYKIRRGRTRPQ) are Cytoplasmic-facing. The helical transmembrane segment at 406 to 426 (ALLFLCMILLLIVLHTSYMIY) threads the bilayer. The Extracellular segment spans residues 427 to 483 (SLAPQYVMYGSQNYLIESNITSDAHKGNSTLAVPKRCDADAPKDQCTVTRTYVFLHK). N-linked (GlcNAc...) asparagine glycans are attached at residues asparagine 445 and asparagine 454. Residues 484–504 (FWFFSAAYYFGNWAFLVVFLI) form a helical membrane-spanning segment. Residues 505–537 (GLIVSCCKGKKSVIEGVDEDSDLSDDEPSAYSA) lie on the Cytoplasmic side of the membrane. Phosphoserine is present on residues serine 525 and serine 528.

Belongs to the LIMR family. LMBRD1 subfamily. In terms of assembly, interacts with ABCD4; this interaction induces the translocation of ABCD4 from the endoplasmic reticulum to the lysosome. Interacts with ABCD4 and MMACHC; this interaction ensures the transport of cobalamin from the lysosome to the cytoplasm. Interacts with INSR, adapter protein complex 2 and clathrin heavy chain. N-glycosylated.

The protein resides in the endoplasmic reticulum membrane. It is found in the lysosome membrane. It localises to the cell membrane. The protein localises to the cytoplasmic vesicle. Its subcellular location is the clathrin-coated vesicle. Lysosomal membrane chaperone required to export cobalamin (vitamin B12) from the lysosome to the cytosol, allowing its conversion to cofactors. Targets ABCD4 transporter from the endoplasmic reticulum to the lysosome. Then forms a complex with lysosomal ABCD4 and cytoplasmic MMACHC to transport cobalamin across the lysosomal membrane. Acts as an adapter protein which plays an important role in mediating and regulating the internalization of the insulin receptor (INSR). Involved in clathrin-mediated endocytosis of INSR via its interaction with adapter protein complex 2. Essential for the initiation of gastrulation and early formation of mesoderm structures during embryogenesis. The chain is Lysosomal cobalamin transport escort protein LMBD1 (Lmbrd1) from Rattus norvegicus (Rat).